Here is a 417-residue protein sequence, read N- to C-terminus: Adenylosuccinate synthetase (417 aa).

GTP contacts are provided by residues 11-17 (GDEGKGK) and 39-41 (GHT). The Proton acceptor role is filled by Asp12. The Mg(2+) site is built by Asp12 and Gly39. IMP is bound by residues 12–15 (DEGK), 37–40 (NAGH), Thr126, Arg140, Gln218, Thr233, and Arg295. The active-site Proton donor is the His40. 291 to 297 (TVSGRIR) provides a ligand contact to substrate. Residues Arg297, 323–325 (KLD), and 406–408 (SNG) each bind GTP.

Belongs to the adenylosuccinate synthetase family. In terms of assembly, homodimer. Mg(2+) serves as cofactor.

Its subcellular location is the cytoplasm. It carries out the reaction IMP + L-aspartate + GTP = N(6)-(1,2-dicarboxyethyl)-AMP + GDP + phosphate + 2 H(+). It participates in purine metabolism; AMP biosynthesis via de novo pathway; AMP from IMP: step 1/2. Its function is as follows. Plays an important role in the de novo pathway of purine nucleotide biosynthesis. Catalyzes the first committed step in the biosynthesis of AMP from IMP. The polypeptide is Adenylosuccinate synthetase (Neorickettsia sennetsu (strain ATCC VR-367 / Miyayama) (Ehrlichia sennetsu)).